Here is a 209-residue protein sequence, read N- to C-terminus: Histidine biosynthesis bifunctional protein HisIE (209 aa).

Positions 1 to 116 (MKQADELRFN…EEQAADRFGI (116 aa)) are phosphoribosyl-AMP cyclohydrolase. The interval 117–209 (MNELERVIAE…LKKRHSEIEE (93 aa)) is phosphoribosyl-ATP pyrophosphohydrolase.

The protein in the N-terminal section; belongs to the PRA-CH family. In the C-terminal section; belongs to the PRA-PH family.

It localises to the cytoplasm. It catalyses the reaction 1-(5-phospho-beta-D-ribosyl)-ATP + H2O = 1-(5-phospho-beta-D-ribosyl)-5'-AMP + diphosphate + H(+). It carries out the reaction 1-(5-phospho-beta-D-ribosyl)-5'-AMP + H2O = 1-(5-phospho-beta-D-ribosyl)-5-[(5-phospho-beta-D-ribosylamino)methylideneamino]imidazole-4-carboxamide. It participates in amino-acid biosynthesis; L-histidine biosynthesis; L-histidine from 5-phospho-alpha-D-ribose 1-diphosphate: step 2/9. It functions in the pathway amino-acid biosynthesis; L-histidine biosynthesis; L-histidine from 5-phospho-alpha-D-ribose 1-diphosphate: step 3/9. The sequence is that of Histidine biosynthesis bifunctional protein HisIE (hisI) from Bacillus subtilis (strain 168).